A 191-amino-acid chain; its full sequence is UPF0301 protein Bphy_2327 (191 aa).

Belongs to the UPF0301 (AlgH) family.

In Paraburkholderia phymatum (strain DSM 17167 / CIP 108236 / LMG 21445 / STM815) (Burkholderia phymatum), this protein is UPF0301 protein Bphy_2327.